A 589-amino-acid chain; its full sequence is Ubiquilin-1 (589 aa).

Over residues 1–11 (MAESGESGGPP) the composition is skewed to gly residues. 2 disordered regions span residues 1-35 (MAESGESGGPPGSQDSAAGAEGAGAPAAAASAEPK) and 110-145 (NRPQDHSAQQTNTAGSNVTTSSTPNSNSTSGSATSN). N-acetylalanine is present on alanine 2. The segment covering 12 to 35 (GSQDSAAGAEGAGAPAAAASAEPK) has biased composition (low complexity). The Ubiquitin-like domain maps to 37 to 111 (MKVTVKTPKE…VHLVIKTQNR (75 aa)). A compositionally biased stretch (polar residues) spans 110–124 (NRPQDHSAQQTNTAG). The span at 125 to 145 (SNVTTSSTPNSNSTSGSATSN) shows a compositional bias: low complexity. Residues 178-428 (QLLSNPEMMV…LNNPLFAGNP (251 aa)) are interaction with UBXN4. STI1 domains lie at 182 to 210 (NPEMMVQIMENPFVQSMLSNPDLMRQLIM) and 212 to 251 (NPQMQQLIQRNPEISHMLNNPDIMRQTLELARNPAMMQEM). Residues 295–371 (PFASLVSNTS…NLVPGVGASM (77 aa)) form a disordered region. Residues 299–313 (LVSNTSSGEGSQPSR) show a composition bias toward polar residues. Over residues 327–360 (QTSQSSSASSGTASTVGGTTGSTASGTSGQSTTA) the composition is skewed to low complexity. 2 consecutive STI1 domains span residues 387–434 (NPQL…QEQM) and 438–470 (LPTFLQQMQNPDTLSAMSNPRAMQALLQIQQGL). Residues 488-520 (LGALGSTGGSSGTNGSNATPSENTSPTAGTTEP) form a disordered region. Residues 489 to 499 (GALGSTGGSSG) show a composition bias toward gly residues. The span at 509–520 (ENTSPTAGTTEP) shows a compositional bias: polar residues. Residues 546–586 (RFQQQLEQLSAMGFLNREANLQALIATGGDINAAIERLLGS) form the UBA domain.

In terms of assembly, monomer and homodimer. Heterodimer with UBQLN2. Binds CD47, NBL1, GABRA1, GABRA2, GABRA3, GABRA6, GABRB1, GABRB2 and GABRB3. Binds UBE3A, BTRC, P4HB and MTOR. Interacts with the proteasome 19S subunit. Interacts (via ubiquitin-like domain) with TREX1; the interaction is direct and may control TREX1 subcellular location. Forms a complex with UBXN4 and VCP. Interacts (via UBA domain) with UBQLN4 (via ubiquitin-like domain). Found in a complex with UBQLN2 and MAP1LC3A/B/C. The monomeric form interacts with PSEN2. The monomeric form interacts with PSEN1. Interacts with ORAI1. Interacts (via UBA domain) with TICAM1. Interacts with EPS15. Interacts (via UBA domain) with UBA52 and (via ubiquitin-like domain) with PSMD3 and PSMD4. Interacts with HERPUD1. Interacts with MAP1LC3A/B/C in the presence of UBQLN4. Interacts (via ubiquitin-like domain) with EPS15 (via UIM domains) and both the ubiquitinated and non-ubiquitinated forms can interact with EPS15. Interacts (via ubiquitin-like domain) with EPS15L1, HGS (via UIM domain) and STAM2 (via UIM domain). Interacts with BCL2L10/BCL-B; in the cytoplasm. As to quaternary structure, monomeric form interacts with PSEN1. In terms of processing, degraded during both macroautophagy and during chaperone-mediated autophagy (CMA). Post-translationally, phosphorylated. Ubiquitinated. As to expression, brain (at protein level). Ubiquitous. Highly expressed throughout the brain; detected in neurons and in neuropathological lesions, such as neurofibrillary tangles and Lewy bodies. Highly expressed in heart, placenta, pancreas, lung, liver, skeletal muscle and kidney.

The protein resides in the cytoplasm. The protein localises to the nucleus. It localises to the endoplasmic reticulum. It is found in the cytoplasmic vesicle. Its subcellular location is the autophagosome. The protein resides in the cell membrane. In terms of biological role, plays an important role in the regulation of different protein degradation mechanisms and pathways including ubiquitin-proteasome system (UPS), autophagy and endoplasmic reticulum-associated protein degradation (ERAD) pathway. Mediates the proteasomal targeting of misfolded or accumulated proteins for degradation by binding (via UBA domain) to their polyubiquitin chains and by interacting (via ubiquitin-like domain) with the subunits of the proteasome. Plays a role in the ERAD pathway via its interaction with ER-localized proteins UBXN4, VCP and HERPUD1 and may form a link between the polyubiquitinated ERAD substrates and the proteasome. Involved in the regulation of macroautophagy and autophagosome formation; required for maturation of autophagy-related protein LC3 from the cytosolic form LC3-I to the membrane-bound form LC3-II and may assist in the maturation of autophagosomes to autolysosomes by mediating autophagosome-lysosome fusion. Negatively regulates the TICAM1/TRIF-dependent toll-like receptor signaling pathway by decreasing the abundance of TICAM1 via the autophagic pathway. Promotes the ubiquitination and lysosomal degradation of ORAI1, consequently down-regulating the ORAI1-mediated Ca2+ mobilization. Suppresses the maturation and proteasomal degradation of amyloid beta A4 protein (A4) by stimulating the lysine 63 (K63)-linked polyubiquitination. Delays the maturation of A4 by sequestering it in the Golgi apparatus and preventing its transport to the cell surface for subsequent processing. Ubiquitinates BCL2L10 and thereby stabilizes protein abundance. Plays a role in unfolded protein response (UPR) by attenuating the induction of UPR-inducible genes, DDTI3/CHOP, HSPA5 and PDIA2 during ER stress. Plays a key role in the regulation of the levels of PSEN1 by targeting its accumulation to aggresomes which may then be removed from cells by autophagocytosis. Functionally, plays a role in unfolded protein response (UPR) by attenuating the induction of UPR-inducible genes, DDTI3/CHOP, HSPA5 and PDIA2 during ER stress. This Homo sapiens (Human) protein is Ubiquilin-1 (UBQLN1).